Consider the following 2641-residue polypeptide: Inverse autotransporter adhesin YeeJ (2641 aa).

The signal sequence occupies residues 1 to 26 (MGIKLRRLTAGICLVTQLAFPMAAAA). The LysM domain maps to 50–98 (VPYILGALESAQSVAERFGISVAELRKLNQFRTFARGFDNVRQGDELDV). Positions 99 to 118 (PAQVSEKKLTPPPGNSSDNL) are disordered. The inverse autotransporter stretch occupies residues 125–400 (TSQQIGSLLA…SRYDLVDRNN (276 aa)). The interval 513-605 (QKDSSVSLST…GVDAAKAPAV (93 aa)) is invasin 3 domain. Big-1 domains are found at residues 617–711 (HSSI…AGFI), 721–815 (IATL…VSFV), 822–913 (QVDL…VNFI), 920–1017 (ALTL…MTFV), 1024–1116 (VVVL…VNIA), 1123–1220 (QVTL…VTFV), 1227–1319 (VVVL…VNIA), 1326–1423 (QVTL…VTFV), 1430–1523 (QVVL…VHFI), 1531–1633 (IIEL…SINV), 1641–1734 (HLTL…VTYV), 1741–1837 (EISL…VNFT), 1844–1941 (QVNL…VTLI), 1948–2032 (KLTS…PTEV), 2048–2139 (FTSL…LEAI), 2142–2236 (KLTL…VKVT), and 2244–2336 (VASF…ITLV). The interval 2538-2641 (KSWWVNAGDA…FAHATCYKNL (104 aa)) is C-type lectin domain.

It belongs to the intimin/invasin family.

It localises to the cell outer membrane. A probable inverse autotransporter, it may be involved in biofilm formation and cell adhesion. May bind peptidoglycan via its LysM domain. Upon overexpression shows increased mature biofilm formation. The chain is Inverse autotransporter adhesin YeeJ from Escherichia coli O17:K52:H18 (strain UMN026 / ExPEC).